A 261-amino-acid chain; its full sequence is L-erythrulose-1-phosphate isomerase (261 aa).

Residue His99 is the Electrophile of the active site. Glu172 (proton acceptor) is an active-site residue.

It belongs to the triosephosphate isomerase family.

The enzyme catalyses L-erythrulose 1-phosphate = D-erythrulose 4-phosphate. The protein operates within carbohydrate metabolism. In terms of biological role, involved in catabolism of D-apiose. Catalyzes the isomerization of L-erythrulose 1-phosphate to D-erythrulose 4-phosphate. The polypeptide is L-erythrulose-1-phosphate isomerase (Rhizobium rhizogenes (strain K84 / ATCC BAA-868) (Agrobacterium radiobacter)).